A 271-amino-acid polypeptide reads, in one-letter code: Ribosomal RNA small subunit methyltransferase A (271 aa).

S-adenosyl-L-methionine contacts are provided by His-18, Leu-20, Gly-45, Glu-66, Asp-91, and Asn-113.

The protein belongs to the class I-like SAM-binding methyltransferase superfamily. rRNA adenine N(6)-methyltransferase family. RsmA subfamily.

The protein resides in the cytoplasm. The enzyme catalyses adenosine(1518)/adenosine(1519) in 16S rRNA + 4 S-adenosyl-L-methionine = N(6)-dimethyladenosine(1518)/N(6)-dimethyladenosine(1519) in 16S rRNA + 4 S-adenosyl-L-homocysteine + 4 H(+). Functionally, specifically dimethylates two adjacent adenosines (A1518 and A1519) in the loop of a conserved hairpin near the 3'-end of 16S rRNA in the 30S particle. May play a critical role in biogenesis of 30S subunits. The polypeptide is Ribosomal RNA small subunit methyltransferase A (Baumannia cicadellinicola subsp. Homalodisca coagulata).